A 501-amino-acid chain; its full sequence is L-aspartate decarboxylase dtxS4 (501 aa).

106–108 contributes to the substrate binding site; it reads KLT. Position 320 is an N6-(pyridoxal phosphate)lysine (Lys320). Arg474 provides a ligand contact to substrate.

This sequence belongs to the group II decarboxylase family. Requires pyridoxal 5'-phosphate as cofactor.

It catalyses the reaction L-aspartate + H(+) = beta-alanine + CO2. The protein operates within secondary metabolite biosynthesis. Its function is as follows. L-aspartate decarboxylase; part of the gene cluster that mediates the biosynthesis of destruxins, insecticidal cyclic hexadepsipeptides which induce flaccid paralysis and visceral muscle contraction in insects through targeting the calcium channels and vacuolar-type ATPases. The aldo-keto reductase dtxS3 converts alpha-ketoisocaproic acid from deaminated leucine into alpha-hydroxyisocaproic acid (HIC), which is the first substrate for destruxin assembly by dtxS1. L-aspartate decarboxylase dtxS4 converts aspartic acid into beta-alanine, the last substrate for the destruxin assembly line performed by dtxS1. The nonribosomal peptide synthetase dtxS1 synthesizes destruxins B and B2, whereas the cytochrome P450 monooxygenase dtxS2 is required to convert destruxin B into other destruxin derivatives, including destructins C, D, A and E. Destruxin E-diol (ED) is further produced in a non-enzymatic manner from destruxin E. Destruxins play an important role in virulence and escape from insect host immune defenses. This chain is L-aspartate decarboxylase dtxS4, found in Metarhizium robertsii (strain ARSEF 23 / ATCC MYA-3075) (Metarhizium anisopliae (strain ARSEF 23)).